An 865-amino-acid chain; its full sequence is Protein translocase subunit SecA (865 aa).

Residues Gln93, 111 to 115 (GEGKT), and Asp501 contribute to the ATP site. Residues Cys841, Cys843, Cys852, and Cys853 each contribute to the Zn(2+) site.

Belongs to the SecA family. Monomer and homodimer. Part of the essential Sec protein translocation apparatus which comprises SecA, SecYEG and auxiliary proteins SecDF-YajC and YidC. The cofactor is Zn(2+).

The protein localises to the cell inner membrane. The protein resides in the cytoplasm. The catalysed reaction is ATP + H2O + cellular proteinSide 1 = ADP + phosphate + cellular proteinSide 2.. Its function is as follows. Part of the Sec protein translocase complex. Interacts with the SecYEG preprotein conducting channel. Has a central role in coupling the hydrolysis of ATP to the transfer of proteins into and across the cell membrane, serving as an ATP-driven molecular motor driving the stepwise translocation of polypeptide chains across the membrane. This is Protein translocase subunit SecA from Helicobacter acinonychis (strain Sheeba).